Here is a 390-residue protein sequence, read N- to C-terminus: DNA primase small subunit PriS (390 aa).

Active-site residues include Asp-98, Asp-100, and Asp-296.

It belongs to the eukaryotic-type primase small subunit family. As to quaternary structure, heterodimer of a small subunit (PriS) and a large subunit (PriL). Requires Mg(2+) as cofactor. The cofactor is Mn(2+).

Catalytic subunit of DNA primase, an RNA polymerase that catalyzes the synthesis of short RNA molecules used as primers for DNA polymerase during DNA replication. The small subunit contains the primase catalytic core and has DNA synthesis activity on its own. Binding to the large subunit stabilizes and modulates the activity, increasing the rate of DNA synthesis while decreasing the length of the DNA fragments, and conferring RNA synthesis capability. The DNA polymerase activity may enable DNA primase to also catalyze primer extension after primer synthesis. May also play a role in DNA repair. The sequence is that of DNA primase small subunit PriS from Methanococcoides burtonii (strain DSM 6242 / NBRC 107633 / OCM 468 / ACE-M).